The chain runs to 533 residues: CTP synthase (533 aa).

An amidoligase domain region spans residues 1–269 (MKKNLKILVI…HEILSSKLNI (269 aa)). Ser-16 provides a ligand contact to CTP. Ser-16 lines the UTP pocket. Residues 17–22 (GIGKGV) and Asp-73 each bind ATP. Mg(2+)-binding residues include Asp-73 and Glu-143. CTP is bound by residues 150-152 (DME), 190-195 (KSKPTQ), and Lys-226. UTP-binding positions include 190–195 (KSKPTQ) and Lys-226. The region spanning 304–533 (YAELDDSYAS…LFLGLIKACI (230 aa)) is the Glutamine amidotransferase type-1 domain. Gly-355 is an L-glutamine binding site. Catalysis depends on Cys-382, which acts as the Nucleophile; for glutamine hydrolysis. Residues 383–386 (LGLQ), Glu-406, and Arg-466 each bind L-glutamine. Catalysis depends on residues His-511 and Glu-513.

Belongs to the CTP synthase family. As to quaternary structure, homotetramer.

The catalysed reaction is UTP + L-glutamine + ATP + H2O = CTP + L-glutamate + ADP + phosphate + 2 H(+). It catalyses the reaction L-glutamine + H2O = L-glutamate + NH4(+). It carries out the reaction UTP + NH4(+) + ATP = CTP + ADP + phosphate + 2 H(+). Its pathway is pyrimidine metabolism; CTP biosynthesis via de novo pathway; CTP from UDP: step 2/2. Allosterically activated by GTP, when glutamine is the substrate; GTP has no effect on the reaction when ammonia is the substrate. The allosteric effector GTP functions by stabilizing the protein conformation that binds the tetrahedral intermediate(s) formed during glutamine hydrolysis. Inhibited by the product CTP, via allosteric rather than competitive inhibition. In terms of biological role, catalyzes the ATP-dependent amination of UTP to CTP with either L-glutamine or ammonia as the source of nitrogen. Regulates intracellular CTP levels through interactions with the four ribonucleotide triphosphates. This is CTP synthase from Borreliella afzelii (strain PKo) (Borrelia afzelii).